The primary structure comprises 134 residues: Small ribosomal subunit protein uS8c (134 aa).

The protein belongs to the universal ribosomal protein uS8 family. Part of the 30S ribosomal subunit.

It localises to the plastid. The protein localises to the chloroplast. In terms of biological role, one of the primary rRNA binding proteins, it binds directly to 16S rRNA central domain where it helps coordinate assembly of the platform of the 30S subunit. The sequence is that of Small ribosomal subunit protein uS8c (rps8) from Gossypium barbadense (Sea Island cotton).